Consider the following 501-residue polypeptide: Lysine--tRNA ligase (501 aa).

The Mg(2+) site is built by glutamate 411 and glutamate 418.

It belongs to the class-II aminoacyl-tRNA synthetase family. Homodimer. The cofactor is Mg(2+).

It localises to the cytoplasm. It carries out the reaction tRNA(Lys) + L-lysine + ATP = L-lysyl-tRNA(Lys) + AMP + diphosphate. This Shewanella woodyi (strain ATCC 51908 / MS32) protein is Lysine--tRNA ligase.